A 330-amino-acid polypeptide reads, in one-letter code: Probable deoxyhypusine synthase (330 aa).

The disordered stretch occupies residues methionine 1 to aspartate 25. Lysine 298 (nucleophile) is an active-site residue.

This sequence belongs to the deoxyhypusine synthase family. Requires NAD(+) as cofactor.

It catalyses the reaction [eIF5A protein]-L-lysine + spermidine = [eIF5A protein]-deoxyhypusine + propane-1,3-diamine. It participates in protein modification; eIF5A hypusination. Catalyzes the NAD-dependent oxidative cleavage of spermidine and the subsequent transfer of the butylamine moiety of spermidine to the epsilon-amino group of a specific lysine residue of the eIF-5A precursor protein to form the intermediate deoxyhypusine residue. The chain is Probable deoxyhypusine synthase from Halobacterium salinarum (strain ATCC 29341 / DSM 671 / R1).